A 181-amino-acid polypeptide reads, in one-letter code: Oligoribonuclease (181 aa).

Residues 8–171 (LIWIDLEMTG…QDIQESIAEL (164 aa)) form the Exonuclease domain. Y129 is a catalytic residue.

It belongs to the oligoribonuclease family.

The protein resides in the cytoplasm. Functionally, 3'-to-5' exoribonuclease specific for small oligoribonucleotides. This Shewanella baltica (strain OS155 / ATCC BAA-1091) protein is Oligoribonuclease.